Reading from the N-terminus, the 413-residue chain is Variant surface glycoprotein YnAT 1.3 (413 aa).

Residues 1–22 (MLDNSRARSIVHLLILLKAHVI) form the signal peptide. Residues Asn-91, Asn-361, and Asn-379 are each glycosylated (N-linked (GlcNAc...) asparagine). Asn-379 is lipidated: GPI-anchor amidated asparagine. Positions 380-413 (SSNPTSRQNSVVQEPTTVSAAAITPLILPWTLLI) are cleaved as a propeptide — removed in mature form.

It is found in the cell membrane. In terms of biological role, VSG forms a coat on the surface of the parasite. The trypanosome evades the immune response of the host by expressing a series of antigenically distinct VSGs from an estimated 1000 VSG genes. This Trypanosoma congolense protein is Variant surface glycoprotein YnAT 1.3.